Here is a 203-residue protein sequence, read N- to C-terminus: ATP-dependent Clp protease proteolytic subunit (203 aa).

Serine 107 acts as the Nucleophile in catalysis. The active site involves histidine 132.

This sequence belongs to the peptidase S14 family. Fourteen ClpP subunits assemble into 2 heptameric rings which stack back to back to give a disk-like structure with a central cavity, resembling the structure of eukaryotic proteasomes.

The protein resides in the cytoplasm. The enzyme catalyses Hydrolysis of proteins to small peptides in the presence of ATP and magnesium. alpha-casein is the usual test substrate. In the absence of ATP, only oligopeptides shorter than five residues are hydrolyzed (such as succinyl-Leu-Tyr-|-NHMec, and Leu-Tyr-Leu-|-Tyr-Trp, in which cleavage of the -Tyr-|-Leu- and -Tyr-|-Trp bonds also occurs).. Cleaves peptides in various proteins in a process that requires ATP hydrolysis. Has a chymotrypsin-like activity. Plays a major role in the degradation of misfolded proteins. The protein is ATP-dependent Clp protease proteolytic subunit of Shewanella frigidimarina (strain NCIMB 400).